A 344-amino-acid polypeptide reads, in one-letter code: S-adenosylmethionine:tRNA ribosyltransferase-isomerase (344 aa).

Belongs to the QueA family. In terms of assembly, monomer.

The protein resides in the cytoplasm. The enzyme catalyses 7-aminomethyl-7-carbaguanosine(34) in tRNA + S-adenosyl-L-methionine = epoxyqueuosine(34) in tRNA + adenine + L-methionine + 2 H(+). It functions in the pathway tRNA modification; tRNA-queuosine biosynthesis. Its function is as follows. Transfers and isomerizes the ribose moiety from AdoMet to the 7-aminomethyl group of 7-deazaguanine (preQ1-tRNA) to give epoxyqueuosine (oQ-tRNA). The protein is S-adenosylmethionine:tRNA ribosyltransferase-isomerase of Levilactobacillus brevis (strain ATCC 367 / BCRC 12310 / CIP 105137 / JCM 1170 / LMG 11437 / NCIMB 947 / NCTC 947) (Lactobacillus brevis).